The primary structure comprises 716 residues: Epidermal growth factor receptor kinase substrate 8-like protein 2 (716 aa).

Disordered stretches follow at residues 1–25 (MSQS…DGVA) and 182–243 (PQTL…SQEE). In terms of domain architecture, PID spans 46 to 202 (MHETSQYHVQ…RQRQSILPPP (157 aa)). The span at 199-208 (LPPPQGPAPI) shows a compositional bias: pro residues. Residues 234-243 (GFRRRESQEE) show a composition bias toward basic and acidic residues. Position 240 is a phosphoserine (S240). T304 carries the post-translational modification Phosphothreonine. The disordered stretch occupies residues 449 to 488 (VSPVSRQSIRNSQKHSPTSEPTPPGDALPPVSSPHTHRGY). Phosphoserine is present on S450. The span at 452 to 467 (VSRQSIRNSQKHSPTS) shows a compositional bias: polar residues. T470 is modified (phosphothreonine). The 60-residue stretch at 493–552 (AMAKYVKILYDFTARNANELSVLKDEVLEVLEDGRQWWKLRSRSGQAGYVPCNILGEARP) folds into the SH3 domain. S571 carries the phosphoserine modification.

The protein belongs to the EPS8 family. As to quaternary structure, interacts with ABI1. Part of a complex that contains SOS1, ABI1 and EPS8L2. Associates with F-actin.

It is found in the cytoplasm. It localises to the cell projection. The protein resides in the stereocilium. Functionally, stimulates guanine exchange activity of SOS1. May play a role in membrane ruffling and remodeling of the actin cytoskeleton. In the cochlea, is required for stereocilia maintenance in adult hair cells. This chain is Epidermal growth factor receptor kinase substrate 8-like protein 2 (EPS8L2), found in Pongo abelii (Sumatran orangutan).